The primary structure comprises 186 residues: Shikimate kinase (186 aa).

An ATP-binding site is contributed by 21–26; that stretch reads GVGKTT. T25 provides a ligand contact to Mg(2+). Substrate is bound by residues D43, R67, and G90. R129 is a binding site for ATP. Residue R147 participates in substrate binding.

This sequence belongs to the shikimate kinase family. In terms of assembly, monomer. Mg(2+) serves as cofactor.

It localises to the cytoplasm. The catalysed reaction is shikimate + ATP = 3-phosphoshikimate + ADP + H(+). It participates in metabolic intermediate biosynthesis; chorismate biosynthesis; chorismate from D-erythrose 4-phosphate and phosphoenolpyruvate: step 5/7. Functionally, catalyzes the specific phosphorylation of the 3-hydroxyl group of shikimic acid using ATP as a cosubstrate. This chain is Shikimate kinase, found in Bacillus subtilis (strain 168).